Reading from the N-terminus, the 686-residue chain is Glycine--tRNA ligase beta subunit (686 aa).

A disordered region spans residues 65–99 (ALSEEKRGPSVERAKDENGEWSKAAQGFARGQGAT). Over residues 67 to 84 (SEEKRGPSVERAKDENGE) the composition is skewed to basic and acidic residues.

Belongs to the class-II aminoacyl-tRNA synthetase family. Tetramer of two alpha and two beta subunits.

The protein localises to the cytoplasm. The enzyme catalyses tRNA(Gly) + glycine + ATP = glycyl-tRNA(Gly) + AMP + diphosphate. The protein is Glycine--tRNA ligase beta subunit of Leuconostoc citreum (strain KM20).